Consider the following 412-residue polypeptide: Serine/threonine transporter SstT (412 aa).

The next 10 membrane-spanning stretches (helical) occupy residues 16-36 (LVAQIVVGLLAGALLALFLPG), 44-64 (LGDLFVQALKAVAPVLVFVLV), 82-102 (IIVLYALGTLSAAAVAVLASF), 115-135 (TDVIPPAGVGAVLNTLLFNIV), 141-161 (ALLNGNFIGILAWAIGLGFAF), 179-199 (VTLIVKVVIRFAPLGVFGLVA), 217-237 (LLVLVGAMLFMALVMNPLIVF), 298-318 (MGGAAITITVLTLAAVNTLGI), 330-350 (LLAAVCACGASGVAGGSLLLI), and 357-377 (FGISNDLAMQVVAVGFIIGVV).

The protein belongs to the dicarboxylate/amino acid:cation symporter (DAACS) (TC 2.A.23) family.

It localises to the cell inner membrane. The catalysed reaction is L-serine(in) + Na(+)(in) = L-serine(out) + Na(+)(out). It catalyses the reaction L-threonine(in) + Na(+)(in) = L-threonine(out) + Na(+)(out). Functionally, involved in the import of serine and threonine into the cell, with the concomitant import of sodium (symport system). In Stutzerimonas stutzeri (strain A1501) (Pseudomonas stutzeri), this protein is Serine/threonine transporter SstT.